We begin with the raw amino-acid sequence, 185 residues long: Ribosome-recycling factor (185 aa).

It belongs to the RRF family.

The protein localises to the cytoplasm. Functionally, responsible for the release of ribosomes from messenger RNA at the termination of protein biosynthesis. May increase the efficiency of translation by recycling ribosomes from one round of translation to another. This is Ribosome-recycling factor from Clostridium acetobutylicum (strain ATCC 824 / DSM 792 / JCM 1419 / IAM 19013 / LMG 5710 / NBRC 13948 / NRRL B-527 / VKM B-1787 / 2291 / W).